A 555-amino-acid polypeptide reads, in one-letter code: Glutamine--tRNA ligase (555 aa).

Residues proline 34–histidine 44 carry the 'HIGH' region motif. Residues glutamate 35–asparagine 37 and histidine 41–serine 47 each bind ATP. Residues aspartate 67 and tyrosine 212 each contribute to the L-glutamine site. ATP-binding positions include threonine 231, arginine 261–leucine 262, and methionine 269–lysine 271. Positions isoleucine 268–arginine 272 match the 'KMSKS' region motif.

Belongs to the class-I aminoacyl-tRNA synthetase family. In terms of assembly, monomer.

It localises to the cytoplasm. The enzyme catalyses tRNA(Gln) + L-glutamine + ATP = L-glutaminyl-tRNA(Gln) + AMP + diphosphate. The sequence is that of Glutamine--tRNA ligase from Yersinia pseudotuberculosis serotype O:3 (strain YPIII).